We begin with the raw amino-acid sequence, 249 residues long: Protein TIFY 10B (249 aa).

One can recognise a Tify domain in the interval 113-148 (PESQSAPLTIFYGGRVMVFDDFSAEKAKEVIDLANK). The Jas signature appears at 204–229 (PIARRASLHRFLEKRKDRITSKAPYQ). The short motif at 206–213 (ARRASLHR) is the Nuclear localization signal element. A disordered region spans residues 225-249 (KAPYQIDGSAEASSKPTNPAWLSSR). Positions 235-249 (EASSKPTNPAWLSSR) are enriched in polar residues.

It belongs to the TIFY/JAZ family. Homo- and heterodimer. Interacts with COI1, MYC2, MYC3, MYC4, AFPH2/NINJA, TIFY10A/JAZ1, TIFY6B/JAZ3, TIFY11A/JAZ5, TIFY11B/JAZ6, TIFY5A/JAZ8, TIFY7/JAZ9, TIFY9/JAZ10, TIFY3A/JAZ11 and TIFY3B/JAZ12. Interacts with RHD6 and RSL1. In terms of assembly, (Microbial infection) Interacts with the pathogenic Pseudomonas syringae HopZ1a protein. (Microbial infection) Acetylated by Pseudomonas syringae HopZ1a. In terms of processing, ubiquitinated. Targeted for degradation by the SCF(COI1) E3 ubiquitin ligase-proteasome pathway during jasmonate signaling. In terms of tissue distribution, expressed in cotyledons, hypocotyls, roots, sepals, petal vascular tissue and stigmas of developing flowers. Expressed in stamen filaments after jasmonic acid treatment.

Its subcellular location is the nucleus. Its function is as follows. Repressor of jasmonate responses. Jasmonoyl-isoleucine (JA-Ile) specifically promotes COI1-TIFY10B/JAZ2 interaction. Activated by MYC2, MYC3 and MYC4 transcription factors. Interacts with and suppresses RHD6 and RSL1 transcription factor activities to negatively regulate jasmonate-stimulated root hair development. The sequence is that of Protein TIFY 10B from Arabidopsis thaliana (Mouse-ear cress).